We begin with the raw amino-acid sequence, 377 residues long: Protein FAM199X-B (377 aa).

Over residues 240 to 254 (KEHSPRQRCTRESWK) the composition is skewed to basic and acidic residues. The disordered stretch occupies residues 240–350 (KEHSPRQRCT…EQRQARKERI (111 aa)). Residues 256 to 301 (TSYSTASTSGVSGASVSSSSASMVSTASSTGSSGGNSASNSSANMS) are compositionally biased toward low complexity. Positions 319–338 (DSKKRSKQRKLQQKALRKRQ) are enriched in basic residues. Residues 321–349 (KKRSKQRKLQQKALRKRQLKEQRQARKER) adopt a coiled-coil conformation. Residues 339 to 350 (LKEQRQARKERI) are compositionally biased toward basic and acidic residues.

It belongs to the FAM199 family.

This Xenopus laevis (African clawed frog) protein is Protein FAM199X-B (fam199x-b).